Here is a 143-residue protein sequence, read N- to C-terminus: Large ribosomal subunit protein uL16c (143 aa).

It belongs to the universal ribosomal protein uL16 family. In terms of assembly, part of the 50S ribosomal subunit.

The protein localises to the plastid. Its subcellular location is the chloroplast. In Chlorokybus atmophyticus (Soil alga), this protein is Large ribosomal subunit protein uL16c.